A 113-amino-acid chain; its full sequence is Integration host factor subunit alpha (113 aa).

A disordered region spans residues 59 to 80; the sequence is GNFQVRDKPPRPGRNPKTGETI.

The protein belongs to the bacterial histone-like protein family. Heterodimer of an alpha and a beta chain.

Functionally, this protein is one of the two subunits of integration host factor, a specific DNA-binding protein that functions in genetic recombination as well as in transcriptional and translational control. This Bordetella bronchiseptica (strain ATCC BAA-588 / NCTC 13252 / RB50) (Alcaligenes bronchisepticus) protein is Integration host factor subunit alpha.